The following is a 264-amino-acid chain: DNA-directed RNA polymerase subunit Rpo3 (264 aa).

[3Fe-4S] cluster contacts are provided by Cys203, Cys206, and Cys209.

This sequence belongs to the archaeal Rpo3/eukaryotic RPB3 RNA polymerase subunit family. Part of the RNA polymerase complex. The cofactor is [3Fe-4S] cluster.

The protein localises to the cytoplasm. It carries out the reaction RNA(n) + a ribonucleoside 5'-triphosphate = RNA(n+1) + diphosphate. Functionally, DNA-dependent RNA polymerase (RNAP) catalyzes the transcription of DNA into RNA using the four ribonucleoside triphosphates as substrates. The protein is DNA-directed RNA polymerase subunit Rpo3 of Archaeoglobus fulgidus (strain ATCC 49558 / DSM 4304 / JCM 9628 / NBRC 100126 / VC-16).